We begin with the raw amino-acid sequence, 78 residues long: Small ribosomal subunit protein bS20 (78 aa).

The protein belongs to the bacterial ribosomal protein bS20 family.

In terms of biological role, binds directly to 16S ribosomal RNA. The protein is Small ribosomal subunit protein bS20 of Streptococcus pneumoniae serotype 19F (strain G54).